The sequence spans 118 residues: Probable non-functional immunoglobulin lambda variable 1-50 (118 aa).

The signal sequence occupies residues 1–19 (MAWSSLLLTLLAHCTGSWA). A framework-1 region spans residues 20 to 44 (QSVLTQPPSVSGAPGQRVTISCTGS). An Ig-like domain is found at 20–118 (QSVLTQPPSV…CKAWDNSLNA (99 aa)). A disulfide bridge links cysteine 41 with cysteine 109. Positions 45-53 (SSNIGAGYV) are complementarity-determining-1. Residues 54–70 (VHWYQQLPGTAPKLLIY) are framework-2. Residues 71-73 (GNS) are complementarity-determining-2. The segment at 74–109 (NRPSGVPDQFSGSKSGTSASLAITGLQSEDEADYYC) is framework-3. Positions 110-118 (KAWDNSLNA) are complementarity-determining-3.

In terms of assembly, immunoglobulins are composed of two identical heavy chains and two identical light chains; disulfide-linked.

It is found in the secreted. Its subcellular location is the cell membrane. Its function is as follows. Probable non-functional open reading frame (ORF) of V region of the variable domain of immunoglobulin light chains. Non-functional ORF generally cannot participate in the synthesis of a productive immunoglobulin chain due to altered V-(D)-J or switch recombination and/or splicing site (at mRNA level) and/or conserved amino acid change (protein level). Immunoglobulins, also known as antibodies, are membrane-bound or secreted glycoproteins produced by B lymphocytes. In the recognition phase of humoral immunity, the membrane-bound immunoglobulins serve as receptors which, upon binding of a specific antigen, trigger the clonal expansion and differentiation of B lymphocytes into immunoglobulins-secreting plasma cells. Secreted immunoglobulins mediate the effector phase of humoral immunity, which results in the elimination of bound antigens. The antigen binding site is formed by the variable domain of one heavy chain, together with that of its associated light chain. Thus, each immunoglobulin has two antigen binding sites with remarkable affinity for a particular antigen. The variable domains are assembled by a process called V-(D)-J rearrangement and can then be subjected to somatic hypermutations which, after exposure to antigen and selection, allow affinity maturation for a particular antigen. In Homo sapiens (Human), this protein is Probable non-functional immunoglobulin lambda variable 1-50.